Here is a 213-residue protein sequence, read N- to C-terminus: Ribosomal RNA small subunit methyltransferase G (213 aa).

Residues G75, F80, 128–129 (IE), and R144 each bind S-adenosyl-L-methionine.

Belongs to the methyltransferase superfamily. RNA methyltransferase RsmG family.

It localises to the cytoplasm. It carries out the reaction guanosine(527) in 16S rRNA + S-adenosyl-L-methionine = N(7)-methylguanosine(527) in 16S rRNA + S-adenosyl-L-homocysteine. Functionally, specifically methylates the N7 position of guanine in position 527 of 16S rRNA. The chain is Ribosomal RNA small subunit methyltransferase G from Brucella suis biovar 1 (strain 1330).